The sequence spans 448 residues: Adenylosuccinate synthetase 1 (448 aa).

Residues 22-28 and 50-52 each bind GTP; these read GDEGKGK and GHT. Asp-23 functions as the Proton acceptor in the catalytic mechanism. Mg(2+)-binding residues include Asp-23 and Gly-50. IMP contacts are provided by residues 23 to 26, 48 to 51, Thr-139, Arg-153, Gln-234, Thr-249, and Arg-321; these read DEGK and NAGH. His-51 functions as the Proton donor in the catalytic mechanism. 317–323 contacts substrate; that stretch reads SVTGRPR. GTP-binding positions include Arg-323, 349–351, and 431–433; these read KLD and STG.

This sequence belongs to the adenylosuccinate synthetase family. As to quaternary structure, homodimer. It depends on Mg(2+) as a cofactor.

The protein localises to the cytoplasm. The catalysed reaction is IMP + L-aspartate + GTP = N(6)-(1,2-dicarboxyethyl)-AMP + GDP + phosphate + 2 H(+). It functions in the pathway purine metabolism; AMP biosynthesis via de novo pathway; AMP from IMP: step 1/2. Functionally, plays an important role in the de novo pathway of purine nucleotide biosynthesis. Catalyzes the first committed step in the biosynthesis of AMP from IMP. This is Adenylosuccinate synthetase 1 from Burkholderia lata (strain ATCC 17760 / DSM 23089 / LMG 22485 / NCIMB 9086 / R18194 / 383).